Here is a 602-residue protein sequence, read N- to C-terminus: Potassium voltage-gated channel subfamily A member 5 (602 aa).

A disordered region spans residues methionine 1–serine 107. Residues methionine 1 to glutamate 202 form a tetramerization domain region. Residues methionine 1–glycine 238 lie on the Cytoplasmic side of the membrane. The segment covering proline 66–arginine 78 has biased composition (pro residues). Serine 81 carries the post-translational modification Phosphoserine; by CK2 and PKA. Lysine 212 is covalently cross-linked (Glycyl lysine isopeptide (Lys-Gly) (interchain with G-Cter in SUMO)). Residues serine 239 to leucine 260 form a helical membrane-spanning segment. The Extracellular portion of the chain corresponds to glutamate 261–proline 314. Residues arginine 274 to leucine 297 form a disordered region. A compositionally biased stretch (pro residues) spans proline 276 to alanine 286. Residue asparagine 290 is glycosylated (N-linked (GlcNAc...) asparagine). The chain crosses the membrane as a helical span at residues phenylalanine 315 to alanine 336. Cysteine 337 is lipidated: S-palmitoyl cysteine. Residues cysteine 337–isoleucine 347 are Cytoplasmic-facing. A helical transmembrane segment spans residues methionine 348–alanine 368. Over glutamate 369 to serine 384 the chain is Extracellular. The helical; Voltage-sensor transmembrane segment at leucine 385–histidine 405 threads the bilayer. At serine 406–methionine 420 the chain is on the cytoplasmic side. Residues lysine 407 to methionine 420 are S4-S5 linker. Residues arginine 421–tyrosine 442 traverse the membrane as a helical segment. The Extracellular segment spans residues phenylalanine 443–isoleucine 456. An intramembrane region (helical) is located at residues proline 457 to threonine 468. Positions threonine 469–aspartate 474 match the Selectivity filter motif. Residues threonine 469–arginine 476 lie within the membrane without spanning it. Residues proline 477–lysine 483 lie on the Extracellular side of the membrane. The chain crosses the membrane as a helical span at residues isoleucine 484–tyrosine 512. Residues histidine 513–leucine 602 are Cytoplasmic-facing. Residue lysine 525 forms a Glycyl lysine isopeptide (Lys-Gly) (interchain with G-Cter in SUMO) linkage. 3 positions are modified to phosphoserine; by PKA: serine 535, serine 546, and serine 569. Residues threonine 600 to leucine 602 carry the PDZ-binding motif.

This sequence belongs to the potassium channel family. A (Shaker) (TC 1.A.1.2) subfamily. Kv1.5/KCNA5 sub-subfamily. As to quaternary structure, homotetramer and heterotetramer of potassium channel proteins. Interacts with DLG1, which enhances channel currents. Forms a ternary complex with DLG1 and CAV3. Interacts with KCNAB1. Interacts with UBE2I. Interacts with XIRP2; the interaction is required for normal action potential configuration in the heart. Glycosylated. In terms of processing, sumoylated on Lys-212, and Lys-525, preferentially with SUMO3. Sumoylation regulates the voltage sensitivity of the channel. Expressed in the heart (at protein level). Expressed in the brain and weakly expressed in the thymus, skeletal muscle and spleen.

It localises to the cell membrane. It carries out the reaction K(+)(in) = K(+)(out). Its function is as follows. Voltage-gated potassium channel that mediates transmembrane potassium transport in excitable membranes. Forms tetrameric potassium-selective channels through which potassium ions pass in accordance with their electrochemical gradient. The channel alternates between opened and closed conformations in response to the voltage difference across the membrane. Can form functional homotetrameric channels and heterotetrameric channels that contain variable proportions of KCNA1, KCNA2, KCNA4, KCNA5, and possibly other family members as well; channel properties depend on the type of alpha subunits that are part of the channel. Channel properties are modulated by cytoplasmic beta subunits that regulate the subcellular location of the alpha subunits and promote rapid inactivation. Homotetrameric channels display rapid activation and slow inactivation. Required for normal electrical conduction including formation of the infranodal ventricular conduction system and normal action potential configuration, as a result of its interaction with XIRP2. May play a role in regulating the secretion of insulin in normal pancreatic islets. In terms of biological role, voltage-gated potassium channel that mediates transmembrane potassium transport in excitable membranes. Forms tetrameric potassium-selective channels through which potassium ions pass in accordance with their electrochemical gradient. The channel alternates between opened and closed conformations in response to the voltage difference across the membrane. Functionally, inactive. Inhibits expression of isoform 1 and isoform 2. This is Potassium voltage-gated channel subfamily A member 5 (Kcna5) from Mus musculus (Mouse).